A 91-amino-acid chain; its full sequence is Acylphosphatase (91 aa).

One can recognise an Acylphosphatase-like domain in the interval 3-89; that stretch reads AKHLILSGRV…PAEPGFVKRA (87 aa). Catalysis depends on residues Arg-18 and Asn-36.

It belongs to the acylphosphatase family.

The catalysed reaction is an acyl phosphate + H2O = a carboxylate + phosphate + H(+). This Acidiphilium cryptum (strain JF-5) protein is Acylphosphatase (acyP).